We begin with the raw amino-acid sequence, 684 residues long: MSKKGTIGVTSDNIFPVIKKFLYSDHEIFLREIVSNAVDATQKLKTLTSVGEFKGETGDLRVTVSVDEVARTITVSDRGVGMTEEEVEKYINQIAFSSAEEFLEKYKDDKAAIIGHFGLGFYSAFMVSERVDVITRSFREDATAVKWSCDGSPEYTLEPADKADRGTDIVMHIDEENSEFLKKEKIEGLLGKYCKFLTVPIIFGKKQEWKDGKMQDTDEDNQINDTHPAWTKKPADLKDEDYKEFYRSLYPMSEEPLFWIHLNVDYPFNLTGILYFPKIKNNLDLQRNKIQLYCNQVYVTDEVQGIVPDFLTLLHGVIDSPDIPLNVSRSYLQSDANVKKISSHITKKVADRLEEIFKNDRPTFEEKWDSLKLFVEYGMLTDEKFYERAAKFFLFTDMDGHKYTFDEYRTLVEGVQTDKDGQVVYLYATDKHGQYSHVKRASDKGYSVMLLDGQLDPHIVSLLEQKLEKTHFVRVDSDTINNLIRKEERAEVKLSDTERATLVKLFEARLPRDEKKHFNVAFESLGAEGEAILITQAEFMRRMRDMAQLQPGMSFYGELPDSYNLVLNTDHPLIDRVLSGEKESVEPSLTELRAKIAELKAEEAKLLDEEKGKKPEEIPVATKEAKENNAVEQAKTEGSINDQLTKYAQDNELIGQLIDLALLGSGLLTGEALAEFIRRSQRLL.

The segment at 1–329 is a; substrate-binding; sequence MSKKGTIGVT…SPDIPLNVSR (329 aa). Residues 330–548 form a b region; it reads SYLQSDANVK…FMRRMRDMAQ (219 aa). The segment at 549–684 is c; the sequence is LQPGMSFYGE…EFIRRSQRLL (136 aa).

Belongs to the heat shock protein 90 family. As to quaternary structure, homodimer.

It is found in the cytoplasm. In terms of biological role, molecular chaperone. Has ATPase activity. The polypeptide is Chaperone protein HtpG (Porphyromonas gingivalis (strain ATCC BAA-308 / W83)).